The following is a 247-amino-acid chain: Lipoprotein-releasing system ATP-binding protein LolD 2 (247 aa).

The ABC transporter domain occupies 19 to 247 (LEARKLVKSY…QDGRLQACGG (229 aa)). Residue 56 to 63 (GASGSGKT) coordinates ATP.

It belongs to the ABC transporter superfamily. Lipoprotein translocase (TC 3.A.1.125) family. As to quaternary structure, the complex is composed of two ATP-binding proteins (LolD) and two transmembrane proteins (LolC and LolE).

It localises to the cell inner membrane. In terms of biological role, part of the ABC transporter complex LolCDE involved in the translocation of mature outer membrane-directed lipoproteins, from the inner membrane to the periplasmic chaperone, LolA. Responsible for the formation of the LolA-lipoprotein complex in an ATP-dependent manner. This Chlorobaculum tepidum (strain ATCC 49652 / DSM 12025 / NBRC 103806 / TLS) (Chlorobium tepidum) protein is Lipoprotein-releasing system ATP-binding protein LolD 2.